The primary structure comprises 162 residues: Shikimate kinase (162 aa).

11 to 16 serves as a coordination point for ATP; the sequence is GSGKSS. Serine 15 provides a ligand contact to Mg(2+). The substrate site is built by aspartate 33, arginine 57, and glycine 80. Arginine 116 contacts ATP. Substrate is bound at residue arginine 132.

It belongs to the shikimate kinase family. Monomer. It depends on Mg(2+) as a cofactor.

The protein localises to the cytoplasm. It carries out the reaction shikimate + ATP = 3-phosphoshikimate + ADP + H(+). Its pathway is metabolic intermediate biosynthesis; chorismate biosynthesis; chorismate from D-erythrose 4-phosphate and phosphoenolpyruvate: step 5/7. Catalyzes the specific phosphorylation of the 3-hydroxyl group of shikimic acid using ATP as a cosubstrate. This Helicobacter pylori (strain Shi470) protein is Shikimate kinase.